The sequence spans 83 residues: Sulfur carrier protein TusA (83 aa).

The active-site Cysteine persulfide intermediate is the C20.

It belongs to the sulfur carrier protein TusA family.

Its subcellular location is the cytoplasm. Its function is as follows. Sulfur carrier protein which probably makes part of a sulfur-relay system. In Pseudoalteromonas atlantica (strain T6c / ATCC BAA-1087), this protein is Sulfur carrier protein TusA.